We begin with the raw amino-acid sequence, 246 residues long: Probable transcriptional regulatory protein CLK_2466 (246 aa).

This sequence belongs to the TACO1 family.

Its subcellular location is the cytoplasm. This is Probable transcriptional regulatory protein CLK_2466 from Clostridium botulinum (strain Loch Maree / Type A3).